Here is a 126-residue protein sequence, read N- to C-terminus: Adult-specific rigid cuticular protein 12.4 (126 aa).

In terms of domain architecture, Chitin-binding type R&amp;R spans 9 to 87; sequence GGAYNFGFNT…AMAALAPKAP (79 aa).

Its function is as follows. Component of the rigid cuticle of the spider. The polypeptide is Adult-specific rigid cuticular protein 12.4 (Araneus diadematus (European garden spider)).